The primary structure comprises 559 residues: Sporulation protein kinase mde3 (559 aa).

The region spanning 21-323 (YLVKQKLGDG…TAKYCKEVFF (303 aa)) is the Protein kinase domain. ATP is bound by residues 27–35 (LGDGSFGTV) and Lys53. Asp150 acts as the Proton acceptor in catalysis.

Belongs to the protein kinase superfamily. Ser/Thr protein kinase family.

The catalysed reaction is L-seryl-[protein] + ATP = O-phospho-L-seryl-[protein] + ADP + H(+). The enzyme catalyses L-threonyl-[protein] + ATP = O-phospho-L-threonyl-[protein] + ADP + H(+). Protein kinase which is essential for spore formation. In Schizosaccharomyces pombe (strain 972 / ATCC 24843) (Fission yeast), this protein is Sporulation protein kinase mde3 (mde3).